The chain runs to 337 residues: Transaldolase (337 aa).

The Nuclear localization signal motif lies at methionine 1–arginine 10. N6-acetyllysine is present on lysine 115. The Schiff-base intermediate with substrate role is filled by lysine 142. N6-acetyllysine is present on lysine 219. Serine 237 and serine 256 each carry phosphoserine. Lysine 269, lysine 286, and lysine 321 each carry N6-acetyllysine.

It belongs to the transaldolase family. Type 1 subfamily. Homodimer. Interacts with KPNA1 and KPNA4.

Its subcellular location is the nucleus. It is found in the cytoplasm. It catalyses the reaction D-sedoheptulose 7-phosphate + D-glyceraldehyde 3-phosphate = D-erythrose 4-phosphate + beta-D-fructose 6-phosphate. The protein operates within carbohydrate degradation; pentose phosphate pathway; D-glyceraldehyde 3-phosphate and beta-D-fructose 6-phosphate from D-ribose 5-phosphate and D-xylulose 5-phosphate (non-oxidative stage): step 2/3. Catalyzes the rate-limiting step of the non-oxidative phase in the pentose phosphate pathway. Catalyzes the reversible conversion of sedheptulose-7-phosphate and D-glyceraldehyde 3-phosphate into erythrose-4-phosphate and beta-D-fructose 6-phosphate. The chain is Transaldolase (Taldo1) from Rattus norvegicus (Rat).